We begin with the raw amino-acid sequence, 384 residues long: 1-deoxy-D-xylulose 5-phosphate reductoisomerase (384 aa).

The NADPH site is built by Thr-10, Gly-11, Ser-12, Ile-13, Arg-37, Asn-38, and Asn-124. Lys-125 contacts 1-deoxy-D-xylulose 5-phosphate. Position 126 (Glu-126) interacts with NADPH. Residue Asp-150 participates in Mn(2+) binding. Positions 151, 152, 176, and 199 each coordinate 1-deoxy-D-xylulose 5-phosphate. Glu-152 contacts Mn(2+). Residue Gly-205 coordinates NADPH. Residues Ser-212, Asn-217, Lys-218, and Glu-221 each coordinate 1-deoxy-D-xylulose 5-phosphate. Glu-221 serves as a coordination point for Mn(2+).

Belongs to the DXR family. It depends on Mg(2+) as a cofactor. Requires Mn(2+) as cofactor.

It carries out the reaction 2-C-methyl-D-erythritol 4-phosphate + NADP(+) = 1-deoxy-D-xylulose 5-phosphate + NADPH + H(+). It participates in isoprenoid biosynthesis; isopentenyl diphosphate biosynthesis via DXP pathway; isopentenyl diphosphate from 1-deoxy-D-xylulose 5-phosphate: step 1/6. In terms of biological role, catalyzes the NADPH-dependent rearrangement and reduction of 1-deoxy-D-xylulose-5-phosphate (DXP) to 2-C-methyl-D-erythritol 4-phosphate (MEP). This Clostridium perfringens (strain 13 / Type A) protein is 1-deoxy-D-xylulose 5-phosphate reductoisomerase.